Consider the following 263-residue polypeptide: Energy-coupling factor transporter transmembrane protein EcfT (263 aa).

Helical transmembrane passes span 22–42, 69–89, 105–125, and 243–263; these read IIFAFCFIPLVFLANNAATNI, ILFLIIFTFIIQLLFTREGAV, LAIIVSLRFFYLVSITTLVTL, and TGLILLLVALGLLLVYLRGGF.

Belongs to the energy-coupling factor EcfT family. In terms of assembly, forms a stable energy-coupling factor (ECF) transporter complex composed of 2 membrane-embedded substrate-binding proteins (S component), 2 ATP-binding proteins (A component) and 2 transmembrane proteins (T component). May be able to interact with more than 1 S component at a time.

It localises to the cell membrane. In terms of biological role, transmembrane (T) component of an energy-coupling factor (ECF) ABC-transporter complex. Unlike classic ABC transporters this ECF transporter provides the energy necessary to transport a number of different substrates. In Exiguobacterium sibiricum (strain DSM 17290 / CCUG 55495 / CIP 109462 / JCM 13490 / 255-15), this protein is Energy-coupling factor transporter transmembrane protein EcfT.